The chain runs to 336 residues: Atypical chemokine receptor 1 (336 aa).

Residues 1-30 (MGNCLHRAELSPSTENSSQLDFEDVWNSSY) are mediates Plasmodium vivax Duffy receptor (PVDR) binding. The Extracellular portion of the chain corresponds to 1–63 (MGNCLHRAEL…CNLLDDSALP (63 aa)). N-linked (GlcNAc...) asparagine glycosylation occurs at Asn16. Position 30 is a sulfotyrosine (Tyr30). A glycan (N-linked (GlcNAc...) asparagine) is linked at Asn33. Tyr41 is modified (sulfotyrosine). Cystine bridges form between Cys51-Cys276 and Cys129-Cys195. A helical transmembrane segment spans residues 64–84 (FFILTSVLGILASSTVLFMLF). Over 85 to 95 (RPLFRWQLCPG) the chain is Cytoplasmic. The chain crosses the membrane as a helical span at residues 96–116 (WPVLAQLAVGSALFSIVVPVL). Over 117–129 (APGLGSTRSSALC) the chain is Extracellular. The chain crosses the membrane as a helical span at residues 130–153 (SLGYCVWYGSAFAQALLLGCHASL). Residues 154 to 166 (GHRLGAGQVPGLT) are Cytoplasmic-facing. A helical transmembrane segment spans residues 167–187 (LGLTVGIWGVAALLTLPVTLA). Residues 188–207 (SGASGGLCTLIYSTELKALQ) are Extracellular-facing. A helical membrane pass occupies residues 208–228 (ATHTVACLAIFVLLPLGLFGA). Topologically, residues 229 to 244 (KGLKKALGMGPGPWMN) are cytoplasmic. Residues 245-265 (ILWAWFIFWWPHGVVLGLDFL) form a helical membrane-spanning segment. Residues 266–287 (VRSKLLLLSTCLAQQALDLLLN) lie on the Extracellular side of the membrane. Residues 288-308 (LAEALAILHCVATPLLLALFC) traverse the membrane as a helical segment. Topologically, residues 309–336 (HQATRTLLPSLPLPEGWSSHLDTLGSKS) are cytoplasmic.

It belongs to the G-protein coupled receptor 1 family. Atypical chemokine receptor subfamily. As to quaternary structure, (Microbial infection) Interacts (via N-terminal extracellular domain) with Plasmodium vivax Duffy receptor (PVDR) (via PvRII region). In terms of assembly, (Microbial infection) Interacts (via N-terminal extracellular domain) with Plasmodium knowlesi Duffy receptor alpha form (DBPalpha) (via region II). Sulfation at Tyr-41 facilitates interaction with MGSA/CXCL1, RANTES/CCL5 and MCP-1/CCL2 but not IL8/CXCL8. Sulfation at Tyr-30 facilitates interaction with IL8/CXCL8. In terms of processing, (Microbial infection) Sulfation at Tyr-41 facilitates interaction with Plasmodium vivax Duffy receptor (PVDR). Sulfation at Tyr-30/Tyr-41 and Tyr-41 alone increases binding affinity of Plasmodium vivax parasites and likely promotes invasion of red blood cells. Post-translationally, (Microbial infection) Sulfation at Tyr-41 facilitates interaction with Plasmodium knowlesi Duffy receptor alpha form (DBPalpha). Sulfation at Tyr-30/Tyr-41 and Tyr-41 alone increases binding affinity of Plasmodium knowlesi parasites and likely promotes invasion of red blood cells. In terms of tissue distribution, found in adult kidney, adult spleen, bone marrow and fetal liver. In particular, it is expressed along postcapillary venules throughout the body, except in the adult liver. Erythroid cells and postcapillary venule endothelium are the principle tissues expressing duffy. Fy(-A-B) individuals do not express duffy in the bone marrow, however they do, in postcapillary venule endothelium.

Its subcellular location is the early endosome. It localises to the recycling endosome. The protein resides in the membrane. Functionally, atypical chemokine receptor that controls chemokine levels and localization via high-affinity chemokine binding that is uncoupled from classic ligand-driven signal transduction cascades, resulting instead in chemokine sequestration, degradation, or transcytosis. Also known as interceptor (internalizing receptor) or chemokine-scavenging receptor or chemokine decoy receptor. Has a promiscuous chemokine-binding profile, interacting with inflammatory chemokines of both the CXC and the CC subfamilies but not with homeostatic chemokines. Acts as a receptor for chemokines including CCL2, CCL5, CCL7, CCL11, CCL13, CCL14, CCL17, CXCL5, CXCL6, IL8/CXCL8, CXCL11, GRO, RANTES, MCP-1 and TARC. May regulate chemokine bioavailability and, consequently, leukocyte recruitment through two distinct mechanisms: when expressed in endothelial cells, it sustains the abluminal to luminal transcytosis of tissue-derived chemokines and their subsequent presentation to circulating leukocytes; when expressed in erythrocytes, serves as blood reservoir of cognate chemokines but also as a chemokine sink, buffering potential surges in plasma chemokine levels. Its function is as follows. (Microbial infection) Acts as a receptor for the malaria parasite Plasmodium vivax. In terms of biological role, (Microbial infection) Acts as a receptor for the malaria parasite Plasmodium knowlesi. The polypeptide is Atypical chemokine receptor 1 (ACKR1) (Homo sapiens (Human)).